Consider the following 432-residue polypeptide: 5'-deoxyadenosine deaminase (432 aa).

His63 and His65 together coordinate Zn(2+). Substrate contacts are provided by Glu92 and His184. His211 contributes to the Zn(2+) binding site. Residues Glu214 and Asp299 each contribute to the substrate site. Asp299 serves as a coordination point for Zn(2+).

It belongs to the metallo-dependent hydrolases superfamily. MTA/SAH deaminase family. As to quaternary structure, homotetramer. Zn(2+) is required as a cofactor.

The catalysed reaction is 5'-deoxyadenosine + H2O + H(+) = 5'-deoxyinosine + NH4(+). It catalyses the reaction S-adenosyl-L-homocysteine + H2O + H(+) = S-inosyl-L-homocysteine + NH4(+). It carries out the reaction S-methyl-5'-thioadenosine + H2O + H(+) = S-methyl-5'-thioinosine + NH4(+). The enzyme catalyses adenosine + H2O + H(+) = inosine + NH4(+). Its pathway is amino-acid biosynthesis; S-adenosyl-L-methionine biosynthesis. Functionally, catalyzes the deamination of three SAM-derived enzymatic products, namely 5'-deoxyadenosine, S-adenosyl-L-homocysteine, and 5'-methylthioadenosine, to produce the inosine analogs. Can also deaminate adenosine. The preferred substrate for this enzyme is 5'-deoxyadenosine, but all these substrates are efficiently deaminated. Likely functions in a S-adenosyl-L-methionine (SAM) recycling pathway from S-adenosyl-L-homocysteine (SAH) produced from SAM-dependent methylation reactions. May also be involved in the recycling of 5'-deoxyadenosine, whereupon the 5'-deoxyribose moiety of 5'-deoxyinosine is further metabolized to deoxyhexoses used for the biosynthesis of aromatic amino acids in methanogens. The protein is 5'-deoxyadenosine deaminase of Methanosarcina barkeri (strain Fusaro / DSM 804).